The following is a 392-amino-acid chain: Glyceraldehyde-3-phosphate dehydrogenase A, chloroplastic (392 aa).

Residues 1 to 56 (NSSLQVSNKGFSEFSGLRTSSAIPFGRKTNDDLLSVVAFQTSVIGGGNSKRGVVEA) constitute a chloroplast transit peptide. Residues 67-68 (RI), Asp-91, and Arg-136 contribute to the NADP(+) site. Residues 208-210 (SCT), Thr-239, Arg-254, 267-268 (TG), and Arg-290 each bind D-glyceraldehyde 3-phosphate. Cys-209 functions as the Nucleophile in the catalytic mechanism. Asn-372 provides a ligand contact to NADP(+).

This sequence belongs to the glyceraldehyde-3-phosphate dehydrogenase family. As to quaternary structure, tetramer of either four A chains (GAPDH 2) or two A and two B chains (GAPDH 1).

Its subcellular location is the plastid. It localises to the chloroplast. The enzyme catalyses D-glyceraldehyde 3-phosphate + phosphate + NADP(+) = (2R)-3-phospho-glyceroyl phosphate + NADPH + H(+). Its pathway is carbohydrate biosynthesis; Calvin cycle. This chain is Glyceraldehyde-3-phosphate dehydrogenase A, chloroplastic (GAPA), found in Nicotiana tabacum (Common tobacco).